A 23-amino-acid polypeptide reads, in one-letter code: Acidic phospholipase A2 Ts-A5 (23 aa).

Requires Ca(2+) as cofactor. Contains 7 disulfide bonds. Expressed by the venom gland.

It localises to the secreted. The enzyme catalyses a 1,2-diacyl-sn-glycero-3-phosphocholine + H2O = a 1-acyl-sn-glycero-3-phosphocholine + a fatty acid + H(+). In terms of biological role, snake venom phospholipase A2 (PLA2) that shows a moderate inhibition of ADP-induced human platelet aggregation when tested on platelet rich plasma. Exhibits high hydrolytic activities and prefers the anionic micelles (dPPC with deoxycholate) to the zwitterionic micelles (dPPC with Triton X-100). PLA2 catalyzes the calcium-dependent hydrolysis of the 2-acyl groups in 3-sn-phosphoglycerides. The chain is Acidic phospholipase A2 Ts-A5 from Trimeresurus stejnegeri (Chinese green tree viper).